A 379-amino-acid chain; its full sequence is 1-deoxy-D-xylulose 5-phosphate reductoisomerase (379 aa).

NADPH contacts are provided by T10, G11, S12, I13, N39, and N121. K122 serves as a coordination point for 1-deoxy-D-xylulose 5-phosphate. E123 contributes to the NADPH binding site. D147 is a Mn(2+) binding site. 1-deoxy-D-xylulose 5-phosphate-binding residues include S148, E149, S173, and H196. E149 contacts Mn(2+). Residue G202 coordinates NADPH. 1-deoxy-D-xylulose 5-phosphate contacts are provided by S209, N214, K215, and E218. E218 lines the Mn(2+) pocket.

The protein belongs to the DXR family. The cofactor is Mg(2+). Mn(2+) serves as cofactor.

It catalyses the reaction 2-C-methyl-D-erythritol 4-phosphate + NADP(+) = 1-deoxy-D-xylulose 5-phosphate + NADPH + H(+). Its pathway is isoprenoid biosynthesis; isopentenyl diphosphate biosynthesis via DXP pathway; isopentenyl diphosphate from 1-deoxy-D-xylulose 5-phosphate: step 1/6. In terms of biological role, catalyzes the NADPH-dependent rearrangement and reduction of 1-deoxy-D-xylulose-5-phosphate (DXP) to 2-C-methyl-D-erythritol 4-phosphate (MEP). The protein is 1-deoxy-D-xylulose 5-phosphate reductoisomerase of Chlamydia pneumoniae (Chlamydophila pneumoniae).